Consider the following 74-residue polypeptide: Anaphase-promoting complex subunit 13 (74 aa).

A disordered region spans residues 33–53 (LNELPDPEQDNGGTTESVKEQ).

The protein belongs to the APC13 family. The mammalian APC/C is composed at least of 14 distinct subunits ANAPC1, ANAPC2, CDC27/APC3, ANAPC4, ANAPC5, CDC16/APC6, ANAPC7, CDC23/APC8, ANAPC10, ANAPC11, CDC26/APC12, ANAPC13, ANAPC15 and ANAPC16 that assemble into a complex of at least 19 chains with a combined molecular mass of around 1.2 MDa; APC/C interacts with FZR1 and FBXO5.

It is found in the nucleus. Its pathway is protein modification; protein ubiquitination. In terms of biological role, component of the anaphase promoting complex/cyclosome (APC/C), a cell cycle-regulated E3 ubiquitin ligase that controls progression through mitosis and the G1 phase of the cell cycle. The APC/C complex acts by mediating ubiquitination and subsequent degradation of target proteins: it mainly mediates the formation of 'Lys-11'-linked polyubiquitin chains and, to a lower extent, the formation of 'Lys-48'- and 'Lys-63'-linked polyubiquitin chains. The APC/C complex catalyzes assembly of branched 'Lys-11'-/'Lys-48'-linked branched ubiquitin chains on target proteins. The chain is Anaphase-promoting complex subunit 13 (ANAPC13) from Pongo abelii (Sumatran orangutan).